The chain runs to 360 residues: Putative F-box protein At5g55150 (360 aa).

Positions 6 to 54 constitute an F-box domain; it reads SSWSEFLPELLNTVFHNLNDARDILNCATVCSSWKDSSSAVYYSRTFSP.

In Arabidopsis thaliana (Mouse-ear cress), this protein is Putative F-box protein At5g55150.